Reading from the N-terminus, the 127-residue chain is Fluoride-specific ion channel FluC (127 aa).

Helical transmembrane passes span 4-24 (SLLV…LLGM), 37-57 (TVVA…FLAA), 68-88 (LIIT…AETV), and 96-116 (LLWA…MTAA). Gly75 and Thr78 together coordinate Na(+).

It belongs to the fluoride channel Fluc/FEX (TC 1.A.43) family.

The protein localises to the cell inner membrane. It catalyses the reaction fluoride(in) = fluoride(out). Na(+) is not transported, but it plays an essential structural role and its presence is essential for fluoride channel function. In terms of biological role, fluoride-specific ion channel. Important for reducing fluoride concentration in the cell, thus reducing its toxicity. This Pseudomonas syringae pv. maculicola protein is Fluoride-specific ion channel FluC.